Consider the following 432-residue polypeptide: Glutamate-1-semialdehyde 2,1-aminomutase (432 aa).

Lys-272 is modified (N6-(pyridoxal phosphate)lysine).

Belongs to the class-III pyridoxal-phosphate-dependent aminotransferase family. HemL subfamily. In terms of assembly, homodimer. The cofactor is pyridoxal 5'-phosphate.

The protein resides in the cytoplasm. The catalysed reaction is (S)-4-amino-5-oxopentanoate = 5-aminolevulinate. The protein operates within porphyrin-containing compound metabolism; protoporphyrin-IX biosynthesis; 5-aminolevulinate from L-glutamyl-tRNA(Glu): step 2/2. It participates in porphyrin-containing compound metabolism; chlorophyll biosynthesis. The polypeptide is Glutamate-1-semialdehyde 2,1-aminomutase (Picosynechococcus sp. (strain ATCC 27264 / PCC 7002 / PR-6) (Agmenellum quadruplicatum)).